The following is a 75-amino-acid chain: Veswaprin-c (75 aa).

Residues 1–24 (MSSGGLLLLLGLLTLWAELTPVSS) form the signal peptide. One can recognise a WAP domain in the interval 27–72 (RPKKPGLCPPRPQKPPCVRECKNDWRCPGERKCCRYGCIYECRDPI). Disulfide bonds link C34/C60, C43/C64, C47/C59, and C53/C68.

It belongs to the venom waprin family. In terms of tissue distribution, expressed by the venom gland.

Its subcellular location is the secreted. Damages membranes of susceptible bacteria. Has no hemolytic activity. Not toxic to mice. Does not inhibit the proteinases elastase and cathepsin G. The polypeptide is Veswaprin-c (Demansia vestigiata (Lesser black whip snake)).